The chain runs to 704 residues: Glycogen [starch] synthase, liver (704 aa).

A phosphoserine mark is found at serine 8 and serine 11. Residue lysine 40 participates in UDP binding. UDP-alpha-D-glucose-binding residues include histidine 205 and arginine 211. Residues histidine 291, glutamate 292, glutamine 294, histidine 297, and lysine 301 each coordinate alpha-D-glucose 6-phosphate. UDP is bound at residue arginine 331. UDP-alpha-D-glucose is bound at residue arginine 331. Position 501 (histidine 501) interacts with alpha-D-glucose 6-phosphate. 3 residues coordinate UDP-alpha-D-glucose: glutamate 510, tryptophan 512, and glycine 513. A UDP-binding site is contributed by threonine 515. Residues arginine 582 and arginine 586 each contribute to the alpha-D-glucose 6-phosphate site. A disordered region spans residues 620–704 (KFHLEPTSPP…KKKLHGEYKN (85 aa)). Serine 627 is subject to Phosphoserine. Phosphoserine; by GSK3-alpha and GSK3-beta occurs at positions 641, 645, 649, and 653. The span at 647 to 657 (SGSQTSSPQSS) shows a compositional bias: low complexity. Phosphoserine; by CK2 is present on serine 657. Over residues 659-675 (VENEGDEDERYDEEEEA) the composition is skewed to acidic residues. Phosphoserine is present on serine 684.

It belongs to the glycosyltransferase 3 family. Part of the glycogen synthase (GS)-glycogenin complex, a heterooctamer composed of a tetramer of GS and 2 dimers of glycogenin, where each GS protomer binds to one glycogenin subunit (via glycogenin C-terminus); the GS tetramer may dissociate from glycogenin dimers to continue glycogen polymerization on its own. May also form a heterooctamer complex with GYG1 (via GYG1 C-terminus). In terms of processing, primed phosphorylation at Ser-657 (site 5) by CSNK2A1 and CSNK2A2 is required for inhibitory phosphorylation at Ser-641 (site 3a), Ser-645 (site 3b), Ser-649 (site 3c) and Ser-653 (site 4) by GSK3A an GSK3B. Dephosphorylation at Ser-641 and Ser-645 by PP1 activates the enzyme. Phosphorylation at Ser-8 is not required for interaction with GYG1. Interaction with GYG1 does not regulate the phosphorylation at Ser-8 and Ser-641. In terms of tissue distribution, specifically expressed in liver (at protein level).

The enzyme catalyses [(1-&gt;4)-alpha-D-glucosyl](n) + UDP-alpha-D-glucose = [(1-&gt;4)-alpha-D-glucosyl](n+1) + UDP + H(+). The protein operates within glycan biosynthesis; glycogen biosynthesis. With respect to regulation, allosteric activation by glucose-6-phosphate. Phosphorylation reduces the activity towards UDP-glucose. When in the non-phosphorylated state, glycogen synthase does not require glucose-6-phosphate as an allosteric activator; when phosphorylated it does. Glycogen synthase participates in the glycogen biosynthetic process along with glycogenin and glycogen branching enzyme. Extends the primer composed of a few glucose units formed by glycogenin by adding new glucose units to it. In this context, glycogen synthase transfers the glycosyl residue from UDP-Glc to the non-reducing end of alpha-1,4-glucan. In Rattus norvegicus (Rat), this protein is Glycogen [starch] synthase, liver.